An 89-amino-acid polypeptide reads, in one-letter code: Small ribosomal subunit protein uS15 (89 aa).

It belongs to the universal ribosomal protein uS15 family. As to quaternary structure, part of the 30S ribosomal subunit. Forms a bridge to the 50S subunit in the 70S ribosome, contacting the 23S rRNA.

In terms of biological role, one of the primary rRNA binding proteins, it binds directly to 16S rRNA where it helps nucleate assembly of the platform of the 30S subunit by binding and bridging several RNA helices of the 16S rRNA. Functionally, forms an intersubunit bridge (bridge B4) with the 23S rRNA of the 50S subunit in the ribosome. The sequence is that of Small ribosomal subunit protein uS15 from Clavibacter michiganensis subsp. michiganensis (strain NCPPB 382).